The chain runs to 600 residues: Elongation factor 4 (600 aa).

Residues 5-187 (KYIRNFSIIA…AIVNKLPPPK (183 aa)) enclose the tr-type G domain. Residues 17–22 (DHGKST) and 134–137 (NKID) contribute to the GTP site.

It belongs to the TRAFAC class translation factor GTPase superfamily. Classic translation factor GTPase family. LepA subfamily.

It is found in the cell inner membrane. It carries out the reaction GTP + H2O = GDP + phosphate + H(+). Required for accurate and efficient protein synthesis under certain stress conditions. May act as a fidelity factor of the translation reaction, by catalyzing a one-codon backward translocation of tRNAs on improperly translocated ribosomes. Back-translocation proceeds from a post-translocation (POST) complex to a pre-translocation (PRE) complex, thus giving elongation factor G a second chance to translocate the tRNAs correctly. Binds to ribosomes in a GTP-dependent manner. This Rickettsia canadensis (strain McKiel) protein is Elongation factor 4.